The sequence spans 203 residues: Guanylate kinase (203 aa).

Residues 3-181 (GTLYIVAAPS…AVSEMCAIFT (179 aa)) form the Guanylate kinase-like domain. Residue 10-17 (APSGAGKS) coordinates ATP.

It belongs to the guanylate kinase family.

The protein localises to the cytoplasm. It carries out the reaction GMP + ATP = GDP + ADP. In terms of biological role, essential for recycling GMP and indirectly, cGMP. This is Guanylate kinase from Xanthomonas oryzae pv. oryzae (strain MAFF 311018).